The chain runs to 330 residues: Putative protein N-methyltransferase FAM86B1 (330 aa).

S-adenosyl-L-methionine is bound by residues Trp-139, 165 to 167 (GSG), Trp-228, and Ala-247.

The protein belongs to the class I-like SAM-binding methyltransferase superfamily. EEF2KMT family.

The sequence is that of Putative protein N-methyltransferase FAM86B1 from Homo sapiens (Human).